A 194-amino-acid chain; its full sequence is MRDNNNNNTREEERSSSSKQQQPQAPMSLKIIDSCLRLSVVPLSVATIWLTVTNHESNPDYGNLEYNSIMGLKYMVGVSAISAIYALLSTVSSWVTCLVSKAWLFFIPDQVLAYVMTTSVAGATEIVYLLNKGDKIVTWSEMCSSYPHYCSKLTIALGLHVFVLFFFLFLSVISAYRAFSPFDPPCDSQTNNDA.

A compositionally biased stretch (basic and acidic residues) spans 1 to 16; the sequence is MRDNNNNNTREEERSS. The interval 1–26 is disordered; it reads MRDNNNNNTREEERSSSSKQQQPQAP. The Cytoplasmic portion of the chain corresponds to 1 to 30; sequence MRDNNNNNTREEERSSSSKQQQPQAPMSLK. Residues 31 to 51 traverse the membrane as a helical segment; that stretch reads IIDSCLRLSVVPLSVATIWLT. At 52–74 the chain is on the extracellular side; that stretch reads VTNHESNPDYGNLEYNSIMGLKY. A helical transmembrane segment spans residues 75-95; the sequence is MVGVSAISAIYALLSTVSSWV. At 96 to 110 the chain is on the cytoplasmic side; sequence TCLVSKAWLFFIPDQ. Residues 111-133 form a helical membrane-spanning segment; the sequence is VLAYVMTTSVAGATEIVYLLNKG. The Extracellular segment spans residues 134-152; it reads DKIVTWSEMCSSYPHYCSK. Residues 153–173 traverse the membrane as a helical segment; sequence LTIALGLHVFVLFFFLFLSVI. Over 174–194 the chain is Cytoplasmic; it reads SAYRAFSPFDPPCDSQTNNDA.

It belongs to the Casparian strip membrane proteins (CASP) family. In terms of assembly, homodimer and heterodimers.

It localises to the cell membrane. This chain is CASP-like protein 2D1, found in Arabidopsis thaliana (Mouse-ear cress).